Reading from the N-terminus, the 293-residue chain is D-alanine--D-alanine ligase (293 aa).

Positions 98–291 (KIIWEQHSLT…FNKLVTSIIN (194 aa)) constitute an ATP-grasp domain. ATP is bound at residue 124–177 (NFPLPWAVKPTLEGSSIGISKVDNQMQLNDALMLAWQYAPYALIEQWIKGDEYT). Residues D245, E258, and N260 each coordinate Mg(2+).

This sequence belongs to the D-alanine--D-alanine ligase family. It depends on Mg(2+) as a cofactor. Mn(2+) is required as a cofactor.

The protein resides in the cytoplasm. It carries out the reaction 2 D-alanine + ATP = D-alanyl-D-alanine + ADP + phosphate + H(+). It functions in the pathway cell wall biogenesis; peptidoglycan biosynthesis. In terms of biological role, cell wall formation. The polypeptide is D-alanine--D-alanine ligase (Vesicomyosocius okutanii subsp. Calyptogena okutanii (strain HA)).